The sequence spans 213 residues: ATP phosphoribosyltransferase (213 aa).

It belongs to the ATP phosphoribosyltransferase family. Short subfamily. Heteromultimer composed of HisG and HisZ subunits.

The protein localises to the cytoplasm. It catalyses the reaction 1-(5-phospho-beta-D-ribosyl)-ATP + diphosphate = 5-phospho-alpha-D-ribose 1-diphosphate + ATP. It participates in amino-acid biosynthesis; L-histidine biosynthesis; L-histidine from 5-phospho-alpha-D-ribose 1-diphosphate: step 1/9. In terms of biological role, catalyzes the condensation of ATP and 5-phosphoribose 1-diphosphate to form N'-(5'-phosphoribosyl)-ATP (PR-ATP). Has a crucial role in the pathway because the rate of histidine biosynthesis seems to be controlled primarily by regulation of HisG enzymatic activity. This Listeria monocytogenes serotype 4a (strain HCC23) protein is ATP phosphoribosyltransferase.